We begin with the raw amino-acid sequence, 196 residues long: Phosphoheptose isomerase (196 aa).

The region spanning 34–192 (MVQCLLGGNK…CEIIDTTLFP (159 aa)) is the SIS domain. Residue 49–51 (NGG) participates in substrate binding. His-58 and Gln-62 together coordinate Zn(2+). Substrate contacts are provided by residues Gln-62, 91-92 (ND), 117-119 (STS), Ser-122, and Gln-172. Zn(2+) is bound by residues Gln-172 and His-180.

Belongs to the SIS family. GmhA subfamily. In terms of assembly, homotetramer. The cofactor is Zn(2+).

The protein localises to the cytoplasm. The enzyme catalyses 2 D-sedoheptulose 7-phosphate = D-glycero-alpha-D-manno-heptose 7-phosphate + D-glycero-beta-D-manno-heptose 7-phosphate. The protein operates within carbohydrate biosynthesis; D-glycero-D-manno-heptose 7-phosphate biosynthesis; D-glycero-alpha-D-manno-heptose 7-phosphate and D-glycero-beta-D-manno-heptose 7-phosphate from sedoheptulose 7-phosphate: step 1/1. In terms of biological role, catalyzes the isomerization of sedoheptulose 7-phosphate in D-glycero-D-manno-heptose 7-phosphate. The protein is Phosphoheptose isomerase of Colwellia psychrerythraea (strain 34H / ATCC BAA-681) (Vibrio psychroerythus).